Reading from the N-terminus, the 688-residue chain is UvrABC system protein B (688 aa).

One can recognise a Helicase ATP-binding domain in the interval 31-188 (GRVNAGEPDV…RKFVSMQYQR (158 aa)). Position 44-51 (44-51 (GATGTGKS)) interacts with ATP. The short motif at 97-120 (YYDYYQPEAYVPQTDTFIEKDSSV) is the Beta-hairpin element. In terms of domain architecture, Helicase C-terminal spans 434–587 (QIDDLLEQIR…QVAYNTEHGI (154 aa)). A disordered region spans residues 607–632 (GEDTKKMLEGRGGGKRSPTPNLRREG). The region spanning 642 to 677 (ETIISDLNDQMLQAAGELKFELAARLRDELGDLKRE) is the UVR domain.

Belongs to the UvrB family. Forms a heterotetramer with UvrA during the search for lesions. Interacts with UvrC in an incision complex.

The protein localises to the cytoplasm. The UvrABC repair system catalyzes the recognition and processing of DNA lesions. A damage recognition complex composed of 2 UvrA and 2 UvrB subunits scans DNA for abnormalities. Upon binding of the UvrA(2)B(2) complex to a putative damaged site, the DNA wraps around one UvrB monomer. DNA wrap is dependent on ATP binding by UvrB and probably causes local melting of the DNA helix, facilitating insertion of UvrB beta-hairpin between the DNA strands. Then UvrB probes one DNA strand for the presence of a lesion. If a lesion is found the UvrA subunits dissociate and the UvrB-DNA preincision complex is formed. This complex is subsequently bound by UvrC and the second UvrB is released. If no lesion is found, the DNA wraps around the other UvrB subunit that will check the other stand for damage. The sequence is that of UvrABC system protein B from Clavibacter michiganensis subsp. michiganensis (strain NCPPB 382).